A 244-amino-acid chain; its full sequence is Probable transcriptional regulatory protein TT_C0469 (244 aa).

The protein belongs to the TACO1 family.

It is found in the cytoplasm. This Thermus thermophilus (strain ATCC BAA-163 / DSM 7039 / HB27) protein is Probable transcriptional regulatory protein TT_C0469.